The sequence spans 442 residues: Protein translocase subunit SecY (442 aa).

Transmembrane regions (helical) follow at residues 29-49 (LITIGLLILVRVGIFIPVPDI), 69-89 (IFTGGGLSTVGIFALGILPYI), 126-146 (YIAFGWCIIQGLGLTVGLLRP), 153-173 (PLFIFQTVLAITAGSMFVMWI), 182-202 (IGNGASLLIFVNIVATLPQTL), 217-237 (ITAVVLLMLVFLVMIVGIVFV), 274-294 (VMPIIFASAVLILPSSLAGFA), 320-340 (VYTVVYSVMIFFFSYFYASLI), 377-397 (LTFLGAIFLSFVATLPIFVEQ), and 400-420 (GVTTFQGLGATSLLILVGVAI).

This sequence belongs to the SecY/SEC61-alpha family. As to quaternary structure, component of the Sec protein translocase complex. Heterotrimer consisting of SecY, SecE and SecG subunits. The heterotrimers can form oligomers, although 1 heterotrimer is thought to be able to translocate proteins. Interacts with the ribosome. Interacts with SecDF, and other proteins may be involved. Interacts with SecA.

It localises to the cell inner membrane. Its subcellular location is the cellular thylakoid membrane. Functionally, the central subunit of the protein translocation channel SecYEG. Consists of two halves formed by TMs 1-5 and 6-10. These two domains form a lateral gate at the front which open onto the bilayer between TMs 2 and 7, and are clamped together by SecE at the back. The channel is closed by both a pore ring composed of hydrophobic SecY resides and a short helix (helix 2A) on the extracellular side of the membrane which forms a plug. The plug probably moves laterally to allow the channel to open. The ring and the pore may move independently. This chain is Protein translocase subunit SecY, found in Synechocystis sp. (strain ATCC 27184 / PCC 6803 / Kazusa).